We begin with the raw amino-acid sequence, 593 residues long: MRTDYCGAINTRHLGRTITLCGWVHRRRDHGGVIFIDLRDREGIVQIVCDPDNVAAFPIAEKIRNEFVLEITGLVRHRPEGTVNRGIPSGEIEVLVSTIEILNPSLTPPFQMDDDNLSEAIRLEYRYLDLRRPAMQHNIRLRHKVTMATRVFLDQHGFIDVETPMLTKSTPEGARDYLVPSRVNVGCFFALPQSPQLFKQLLMVSGFDRYYQITRCFRDEDLRADRQPEFTQIDIETSFLQENDIMDLMEDMIRRLFADVINVSLPDPFPRISYADAMFRYGSDKPDLRVPLELTELTDLMQDVPFQVFRDAAQKPGGRVAALRVPGGGELSRKEIDEYTRFVGIYGAKGLAYIKINDLTKGMEGLQSPILKFLPEPVVQSMLERTQAQNGDLVFFGADKVKTVNDALGALRVKIGHERGLATNLWQPLWVVDFPMFEWDEEEKRWQALHHPFTAPSQGHEDFLATDPGKALSRAYDMVLNGMEIGGGSIRIHRQDVQSKVFQALNIADDEAKLKFGFLLDALQYGAPPHGGIAFGLDRIVAMMTGTDSIRDVIAFPKTQRAQCLLTQAPSTVEEKQLRELHIRLRKTDITTD.

Residue Glu172 participates in L-aspartate binding. The tract at residues 196–199 (QLFK) is aspartate. Arg218 provides a ligand contact to L-aspartate. Residues 218–220 (RDE) and Gln227 contribute to the ATP site. Residue His450 participates in L-aspartate binding. An ATP-binding site is contributed by Glu484. An L-aspartate-binding site is contributed by Arg491. Position 536–539 (536–539 (GLDR)) interacts with ATP.

It belongs to the class-II aminoacyl-tRNA synthetase family. Type 1 subfamily. In terms of assembly, homodimer.

Its subcellular location is the cytoplasm. It carries out the reaction tRNA(Asx) + L-aspartate + ATP = L-aspartyl-tRNA(Asx) + AMP + diphosphate. Functionally, aspartyl-tRNA synthetase with relaxed tRNA specificity since it is able to aspartylate not only its cognate tRNA(Asp) but also tRNA(Asn). Reaction proceeds in two steps: L-aspartate is first activated by ATP to form Asp-AMP and then transferred to the acceptor end of tRNA(Asp/Asn). In Nitrosomonas eutropha (strain DSM 101675 / C91 / Nm57), this protein is Aspartate--tRNA(Asp/Asn) ligase.